Reading from the N-terminus, the 158-residue chain is 6,7-dimethyl-8-ribityllumazine synthase (158 aa).

5-amino-6-(D-ribitylamino)uracil is bound by residues phenylalanine 22, 57–59 (AVE), and 81–83 (AVI). Residue 86 to 87 (GT) coordinates (2S)-2-hydroxy-3-oxobutyl phosphate. Catalysis depends on histidine 89, which acts as the Proton donor. Position 114 (phenylalanine 114) interacts with 5-amino-6-(D-ribitylamino)uracil. Residue arginine 128 participates in (2S)-2-hydroxy-3-oxobutyl phosphate binding.

Belongs to the DMRL synthase family. In terms of assembly, forms an icosahedral capsid composed of 60 subunits, arranged as a dodecamer of pentamers.

It catalyses the reaction (2S)-2-hydroxy-3-oxobutyl phosphate + 5-amino-6-(D-ribitylamino)uracil = 6,7-dimethyl-8-(1-D-ribityl)lumazine + phosphate + 2 H2O + H(+). Its pathway is cofactor biosynthesis; riboflavin biosynthesis; riboflavin from 2-hydroxy-3-oxobutyl phosphate and 5-amino-6-(D-ribitylamino)uracil: step 1/2. Its function is as follows. Catalyzes the formation of 6,7-dimethyl-8-ribityllumazine by condensation of 5-amino-6-(D-ribitylamino)uracil with 3,4-dihydroxy-2-butanone 4-phosphate. This is the penultimate step in the biosynthesis of riboflavin. This chain is 6,7-dimethyl-8-ribityllumazine synthase, found in Shewanella frigidimarina (strain NCIMB 400).